The chain runs to 654 residues: tRNA 5-methylaminomethyl-2-thiouridine biosynthesis bifunctional protein MnmC (654 aa).

A tRNA (mnm(5)s(2)U34)-methyltransferase region spans residues 1–236; it reads MPTLLQHAQI…KWEVMSGAYV (236 aa). Residues 262 to 654 form an FAD-dependent cmnm(5)s(2)U34 oxidoreductase region; sequence IGAGLAGSSS…FGLRRLIRGK (393 aa).

It in the N-terminal section; belongs to the methyltransferase superfamily. tRNA (mnm(5)s(2)U34)-methyltransferase family. This sequence in the C-terminal section; belongs to the DAO family. FAD serves as cofactor.

The protein resides in the cytoplasm. The enzyme catalyses 5-aminomethyl-2-thiouridine(34) in tRNA + S-adenosyl-L-methionine = 5-methylaminomethyl-2-thiouridine(34) in tRNA + S-adenosyl-L-homocysteine + H(+). In terms of biological role, catalyzes the last two steps in the biosynthesis of 5-methylaminomethyl-2-thiouridine (mnm(5)s(2)U) at the wobble position (U34) in tRNA. Catalyzes the FAD-dependent demodification of cmnm(5)s(2)U34 to nm(5)s(2)U34, followed by the transfer of a methyl group from S-adenosyl-L-methionine to nm(5)s(2)U34, to form mnm(5)s(2)U34. This is tRNA 5-methylaminomethyl-2-thiouridine biosynthesis bifunctional protein MnmC from Pseudomonas putida (strain ATCC 700007 / DSM 6899 / JCM 31910 / BCRC 17059 / LMG 24140 / F1).